Consider the following 144-residue polypeptide: Large ribosomal subunit protein uL15 (144 aa).

Residues M1–Q54 are disordered. The span at R21–G31 shows a compositional bias: gly residues.

Belongs to the universal ribosomal protein uL15 family. As to quaternary structure, part of the 50S ribosomal subunit.

Functionally, binds to the 23S rRNA. In Enterobacter sp. (strain 638), this protein is Large ribosomal subunit protein uL15.